The chain runs to 501 residues: UPF0371 protein CD630_08980 (501 aa).

Belongs to the UPF0371 family.

The chain is UPF0371 protein CD630_08980 from Clostridioides difficile (strain 630) (Peptoclostridium difficile).